A 932-amino-acid polypeptide reads, in one-letter code: Isoleucine--tRNA ligase (932 aa).

Residues 57 to 67 carry the 'HIGH' region motif; that stretch reads PYANGDIHIGT. Residue E559 coordinates L-isoleucyl-5'-AMP. A 'KMSKS' region motif is present at residues 600-604; it reads KMSKS. Position 603 (K603) interacts with ATP. Residues C899, C902, C919, and C922 each coordinate Zn(2+).

It belongs to the class-I aminoacyl-tRNA synthetase family. IleS type 1 subfamily. In terms of assembly, monomer. It depends on Zn(2+) as a cofactor.

Its subcellular location is the cytoplasm. The catalysed reaction is tRNA(Ile) + L-isoleucine + ATP = L-isoleucyl-tRNA(Ile) + AMP + diphosphate. Its function is as follows. Catalyzes the attachment of isoleucine to tRNA(Ile). As IleRS can inadvertently accommodate and process structurally similar amino acids such as valine, to avoid such errors it has two additional distinct tRNA(Ile)-dependent editing activities. One activity is designated as 'pretransfer' editing and involves the hydrolysis of activated Val-AMP. The other activity is designated 'posttransfer' editing and involves deacylation of mischarged Val-tRNA(Ile). This Caldanaerobacter subterraneus subsp. tengcongensis (strain DSM 15242 / JCM 11007 / NBRC 100824 / MB4) (Thermoanaerobacter tengcongensis) protein is Isoleucine--tRNA ligase.